Here is a 277-residue protein sequence, read N- to C-terminus: MKISTFNAKTKKKKFVNAEEINAFKVAYGKPLNRKDYLRYAIIPGLVTGVFSFLLLYIWWLSLIFGLMGSVYGLKVLMPKVIKRAYERDSFRERNKFVNNMTSLLANDSQTLLTSLQRASDRSQGELRADLKILLASVMGADQEQVLQAFKQMSNKYRDDITFDQYLEQLETCVLEGRTNLETLKDIKTHHNEMKEKKDDYERKKEGHLKDMKMLCGVIVVFVLAITFSFGFKTYITAFARHPIGWITSGIYMTLMCFFFKSFTTYLFDDSIMEVKA.

4 consecutive transmembrane segments (helical) span residues 37–59 (YLRYAIIPGLVTGVFSFLLLYIW), 63–82 (LIFGLMGSVYGLKVLMPKVI), 214–236 (MLCGVIVVFVLAITFSFGFKTYI), and 246–268 (WITSGIYMTLMCFFFKSFTTYLF).

It is found in the cell membrane. This is an uncharacterized protein from Bacillus anthracis.